A 392-amino-acid polypeptide reads, in one-letter code: 8-amino-7-oxononanoate synthase (392 aa).

Position 26 (Arg26) interacts with substrate. 113–114 (GY) is a pyridoxal 5'-phosphate binding site. His138 provides a ligand contact to substrate. Ser186, His214, and Thr241 together coordinate pyridoxal 5'-phosphate. The residue at position 244 (Lys244) is an N6-(pyridoxal phosphate)lysine. Residue Thr353 coordinates substrate.

Belongs to the class-II pyridoxal-phosphate-dependent aminotransferase family. BioF subfamily. In terms of assembly, homodimer. Requires pyridoxal 5'-phosphate as cofactor.

The catalysed reaction is 6-carboxyhexanoyl-[ACP] + L-alanine + H(+) = (8S)-8-amino-7-oxononanoate + holo-[ACP] + CO2. It participates in cofactor biosynthesis; biotin biosynthesis. Functionally, catalyzes the decarboxylative condensation of pimeloyl-[acyl-carrier protein] and L-alanine to produce 8-amino-7-oxononanoate (AON), [acyl-carrier protein], and carbon dioxide. This is 8-amino-7-oxononanoate synthase from Maricaulis maris (strain MCS10) (Caulobacter maris).